A 492-amino-acid polypeptide reads, in one-letter code: 2-succinylbenzoate--CoA ligase (492 aa).

This sequence belongs to the ATP-dependent AMP-binding enzyme family. MenE subfamily.

It catalyses the reaction 2-succinylbenzoate + ATP + CoA = 2-succinylbenzoyl-CoA + AMP + diphosphate. Its pathway is quinol/quinone metabolism; 1,4-dihydroxy-2-naphthoate biosynthesis; 1,4-dihydroxy-2-naphthoate from chorismate: step 5/7. The protein operates within quinol/quinone metabolism; menaquinone biosynthesis. Functionally, converts 2-succinylbenzoate (OSB) to 2-succinylbenzoyl-CoA (OSB-CoA). The chain is 2-succinylbenzoate--CoA ligase from Staphylococcus aureus (strain Mu3 / ATCC 700698).